The primary structure comprises 209 residues: Large ribosomal subunit protein bL9 (209 aa).

A disordered region spans residues 184-209; the sequence is SAASEDSDLVETPEDRATEEAEDEQP.

The protein belongs to the bacterial ribosomal protein bL9 family.

Binds to the 23S rRNA. The chain is Large ribosomal subunit protein bL9 from Dinoroseobacter shibae (strain DSM 16493 / NCIMB 14021 / DFL 12).